Reading from the N-terminus, the 512-residue chain is Kynurenine 3-monooxygenase (512 aa).

The protein belongs to the aromatic-ring hydroxylase family. KMO subfamily. Requires FAD as cofactor.

It is found in the mitochondrion outer membrane. It carries out the reaction L-kynurenine + NADPH + O2 + H(+) = 3-hydroxy-L-kynurenine + NADP(+) + H2O. It functions in the pathway cofactor biosynthesis; NAD(+) biosynthesis; quinolinate from L-kynurenine: step 1/3. Its function is as follows. Catalyzes the hydroxylation of L-kynurenine (L-Kyn) to form 3-hydroxy-L-kynurenine (L-3OHKyn). Required for synthesis of quinolinic acid. In Aspergillus fumigatus (strain ATCC MYA-4609 / CBS 101355 / FGSC A1100 / Af293) (Neosartorya fumigata), this protein is Kynurenine 3-monooxygenase (bna4).